We begin with the raw amino-acid sequence, 265 residues long: Pro-opiomelanocortin (265 aa).

A signal peptide spans 1–26 (MPRLCSSRSGALLLALLLQASMEVRG). Intrachain disulfides connect C28-C50 and C34-C46. The O-linked (GalNAc...) threonine glycan is linked to T71. Residue F87 is modified to Phenylalanine amide. Residues 89-138 (RRNGSSSSGVGGAAQKREEEVAVGEGPGPRGDDAETGPREDKRSYSMEHF) form a disordered region. N91 is a glycosylation site (N-linked (GlcNAc...) asparagine). The propeptide occupies 106-129 (EEEVAVGEGPGPRGDDAETGPRED). Residues 118-138 (RGDDAETGPREDKRSYSMEHF) are compositionally biased toward basic and acidic residues. S132 is modified (N-acetylserine; in Corticotropin). Valine amide is present on V144. The residue at position 162 (S162) is a Phosphoserine. Position 173 is a pyrrolidone carboxylic acid (Glu); partial (E173). Y200 is subject to Sulfotyrosine. The segment at 209–240 (EAAEKKDSGPYKMEHFRWGSPPKDKRYGGFMT) is disordered. Residues 210 to 235 (AAEKKDSGPYKMEHFRWGSPPKDKRY) show a composition bias toward basic and acidic residues.

The protein belongs to the POMC family. Post-translationally, specific enzymatic cleavages at paired basic residues yield the different active peptides. In terms of tissue distribution, ACTH and MSH are produced by the pituitary gland.

Its subcellular location is the secreted. Its function is as follows. Stimulates the adrenal glands to release cortisol. Functionally, anorexigenic peptide. Increases the pigmentation of skin by increasing melanin production in melanocytes. Endogenous orexigenic opiate. In terms of biological role, endogenous opiate. This Bos taurus (Bovine) protein is Pro-opiomelanocortin (POMC).